Reading from the N-terminus, the 156-residue chain is Ribosome maturation factor RimP (156 aa).

It belongs to the RimP family.

Its subcellular location is the cytoplasm. In terms of biological role, required for maturation of 30S ribosomal subunits. The protein is Ribosome maturation factor RimP of Anoxybacillus flavithermus (strain DSM 21510 / WK1).